The chain runs to 547 residues: Agglutinin-1 (547 aa).

Residues 1-20 form the signal peptide; that stretch reads MKFETTKNKLHGNAYYQAQF. Glutamine 21 is modified (pyrrolidone carboxylic acid). Residue glutamate 183 is part of the active site. Cystine bridges form between cysteine 266–cysteine 288, cysteine 305–cysteine 324, and cysteine 348–cysteine 365. The propeptide at 279-280 is linker peptide; that stretch reads RS. A Ricin B-type lectin 1 domain is found at 292–419; the sequence is YEPTVRIGGR…YRMRQGWRTG (128 aa). Residues 302–344 form a 1-alpha repeat; that stretch reads DGLCVDVSDNAYNNGNPIILWKCKDQLEVNQLWTLKSDKTIRS. A 1-beta repeat occupies 345-385; sequence KGKCLTTYGYAPGNYVMIYDCSSAVAEATYWDIWDNGTIIN. N-linked (GlcNAc...) asparagine glycosylation is found at asparagine 380 and asparagine 420. A 1-gamma repeat occupies 388-420; that stretch reads SGLVLSAESSSMGGTLTVQKNDYRMRQGWRTGN. The 125-residue stretch at 422–546 folds into the Ricin B-type lectin 2 domain; it reads TSPFVTSIAG…GNANQMWATL (125 aa). Residues 433-468 form a 2-alpha repeat; the sequence is FKLCMEAHGNSMWLDVCDITKEEQQWAVYPDGSIRP. 2 disulfides stabilise this stretch: cysteine 436-cysteine 449 and cysteine 475-cysteine 492. The stretch at 472–511 is one 2-beta repeat; sequence TNNCLTCEEHKQGATIVMMGCSNAWASQRWVFKSDGTIYN. The stretch at 514–547 is one 2-gamma repeat; that stretch reads DDMVMDVKSSDPSLKQIILWPYTGNANQMWATLF.

This sequence in the N-terminal section; belongs to the ribosome-inactivating protein family. Type 2 RIP subfamily. Heterotetramer of two A and two B chains.

It carries out the reaction Endohydrolysis of the N-glycosidic bond at one specific adenosine on the 28S rRNA.. Functionally, the A chain is responsible for inhibiting protein synthesis through the catalytic inactivation of 60S ribosomal subunits by removing adenine from position 4,324 of 28S rRNA. Less toxic than abrin-a. The B chain is a galactose-specific lectin that facilitates the binding to the cell membrane that precedes endocytosis. This chain is Agglutinin-1, found in Abrus precatorius (Indian licorice).